An 805-amino-acid polypeptide reads, in one-letter code: MAFSPWQILSPVQWAKWTWSAVRGGAAGEDEAGGPEGDPEEEDSQAETKSLSFSSDSEGNFETPEAETPIRSPFKESCDPSLGLAGPGAKSQESQEADEQLVAEVVEKCSSKTCSKPSENEVPQQAIDSHSVKNFREEPEHDFSKISIVRPFSIETKDSTDISAVLGTKAAHGCVTAVSGKALPSSPPDALQDEAMTEGSMGVTLEASAEADLKAGNSCPELVPSRRSKLRKPKPVPLRKKAIGGEFSDTNAAVEGTPLPKASYHFSPEELDENTSPLLGDARFQKSPPDLKETPGTLSSDTNDSGVELGEESRSSPLKLEFDFTEDTGNIEARKALPRKLGRKLGSTLTPKIQKDGISKSAGLEQPTDPVARDGPLSQTSSKPDPSQWESPSFNPFGSHSVLQNSPPLSSEGSYHFDPDNFDESMDPFKPTTTLTSSDFCSPTGNHVNEILESPKKAKSRLITSGCKVKKHETQSLALDACSRDEGAVISQISDISNRDGHATDEEKLASTSCGQKSAGAEVKGEPEEDLEYFECSNVPVSTINHAFSSSEAGIEKETCQKMEEDGSTVLGLLESSAEKAPVSVSCGGESPLDGICLSESDKTAVLTLIREEIITKEIEANEWKKKYEETRQEVLEMRKIVAEYEKTIAQMIEDEQRTSMTSQKSFQQLTMEKEQALADLNSVERSLSDLFRRYENLKGVLEGFKKNEEALKKCAQDYLARVKQEEQRYQALKIHAEEKLDKANEEIAQVRTKAKAESAALHAGLRKEQMKVESLERALQQKNQEIEELTKICDELIAKLGKTD.

Alanine 2 is modified (N-acetylalanine). Alanine 2 carries the N-myristoyl glycine lipid modification. The tract at residues 2–55 (AFSPWQILSPVQWAKWTWSAVRGGAAGEDEAGGPEGDPEEEDSQAETKSLSFSS) is interaction with LSM7 and SNRPG. Residues serine 4, serine 10, and serine 44 each carry the phosphoserine modification. Residues 23–140 (RGGAAGEDEA…SVKNFREEPE (118 aa)) form a disordered region. Residues 28-45 (GEDEAGGPEGDPEEEDSQ) show a composition bias toward acidic residues. 2 stretches are compositionally biased toward polar residues: residues 47–60 (ETKSLSFSSDSEGN) and 111–128 (SKTCSKPSENEVPQQAID). Residues 130–140 (HSVKNFREEPE) show a composition bias toward basic and acidic residues. Serine 147 and serine 153 each carry phosphoserine. Positions 152–259 (FSIETKDSTD…TNAAVEGTPL (108 aa)) are interaction with TDRD7. Residues 206–427 (EASAEADLKA…DPDNFDESMD (222 aa)) form an interaction with YEATS4 region. 2 consecutive SPAZ domains span residues 215–297 (AGNS…TPGT) and 359–507 (SKSA…TDEE). The interval 215-457 (AGNSCPELVP…VNEILESPKK (243 aa)) is disordered. The short motif at 226–241 (RRSKLRKPKPVPLRKK) is the Bipartite nuclear localization signal 1 element. Positions 226-242 (RRSKLRKPKPVPLRKKA) are enriched in basic residues. Serine 228 is modified (phosphoserine; by AURKC). A phosphoserine mark is found at serine 248 and serine 276. Composition is skewed to polar residues over residues 296-305 (GTLSSDTNDS), 377-413 (LSQTSSKPDPSQWESPSFNPFGSHSVLQNSPPLSSEG), and 431-447 (PTTTLTSSDFCSPTGNH). Phosphoserine is present on residues serine 381 and serine 406. The Bipartite nuclear localization signal 2 signature appears at 455–471 (PKKAKSRLITSGCKVKK). The residue at position 483 (serine 483) is a Phosphoserine. The interval 493–526 (ISDISNRDGHATDEEKLASTSCGQKSAGAEVKGE) is disordered. The segment covering 497–509 (SNRDGHATDEEKL) has biased composition (basic and acidic residues). Phosphotyrosine is present on tyrosine 533. The residue at position 591 (serine 591) is a Phosphoserine. Residues 610–805 (IREEIITKEI…ELIAKLGKTD (196 aa)) adopt a coiled-coil conformation. The segment at 701–805 (VLEGFKKNEE…ELIAKLGKTD (105 aa)) is interaction with CH-TOG.

It belongs to the TACC family. Interacts with KIAA0097/CH-TOG and with the oncogenic transcription factor YEATS4. Interacts with AURKA, AURKB and AURKC. Interacts with LSM7, TDRD7 and SNRPG. Interacts with GCN5L2 and PCAF. Interacts with the thyroid hormone receptors THRB and THRA, predominantly with isoform alpha-2. The interaction with THRA isoform alpha-1 and THRB is decreased in the presence of thyroid hormone T3. Also interacts with other nuclear receptors, including ESR1, NR3C1, PPARG, RARA and RXRA, preferentially in the absence of their hormonal ligands. Post-translationally, isoform 1 is heavily phosphorylated; isoform 6 is not. Isoform 1, isoform 3 and isoform 5 are ubiquitous. Isoform 2 is strongly expressed in the brain, weakly detectable in lung and colon, and overexpressed in gastric cancer. Isoform 4 is not detected in normal tissues, but strong expression was found in gastric cancer tissues. Down-regulated in a subset of cases of breast cancer.

The protein localises to the cytoplasm. Its subcellular location is the nucleus. The protein resides in the cytoskeleton. It is found in the microtubule organizing center. It localises to the centrosome. The protein localises to the midbody. Its subcellular location is the membrane. Its function is as follows. Involved in transcription regulation induced by nuclear receptors, including in T3 thyroid hormone and all-trans retinoic acid pathways. Might promote the nuclear localization of the receptors. Likely involved in the processes that promote cell division prior to the formation of differentiated tissues. The chain is Transforming acidic coiled-coil-containing protein 1 (TACC1) from Homo sapiens (Human).